A 236-amino-acid chain; its full sequence is Leucyl/phenylalanyl-tRNA--protein transferase (236 aa).

This sequence belongs to the L/F-transferase family.

It localises to the cytoplasm. It catalyses the reaction N-terminal L-lysyl-[protein] + L-leucyl-tRNA(Leu) = N-terminal L-leucyl-L-lysyl-[protein] + tRNA(Leu) + H(+). The catalysed reaction is N-terminal L-arginyl-[protein] + L-leucyl-tRNA(Leu) = N-terminal L-leucyl-L-arginyl-[protein] + tRNA(Leu) + H(+). The enzyme catalyses L-phenylalanyl-tRNA(Phe) + an N-terminal L-alpha-aminoacyl-[protein] = an N-terminal L-phenylalanyl-L-alpha-aminoacyl-[protein] + tRNA(Phe). Functions in the N-end rule pathway of protein degradation where it conjugates Leu, Phe and, less efficiently, Met from aminoacyl-tRNAs to the N-termini of proteins containing an N-terminal arginine or lysine. The chain is Leucyl/phenylalanyl-tRNA--protein transferase from Shewanella loihica (strain ATCC BAA-1088 / PV-4).